The sequence spans 447 residues: ATP-dependent protease ATPase subunit HslU (447 aa).

ATP-binding positions include isoleucine 18, 60–65 (GVGKTE), aspartate 259, glutamate 325, and arginine 397.

It belongs to the ClpX chaperone family. HslU subfamily. A double ring-shaped homohexamer of HslV is capped on each side by a ring-shaped HslU homohexamer. The assembly of the HslU/HslV complex is dependent on binding of ATP.

Its subcellular location is the cytoplasm. Functionally, ATPase subunit of a proteasome-like degradation complex; this subunit has chaperone activity. The binding of ATP and its subsequent hydrolysis by HslU are essential for unfolding of protein substrates subsequently hydrolyzed by HslV. HslU recognizes the N-terminal part of its protein substrates and unfolds these before they are guided to HslV for hydrolysis. The protein is ATP-dependent protease ATPase subunit HslU of Burkholderia cenocepacia (strain HI2424).